A 290-amino-acid polypeptide reads, in one-letter code: MNPIQLDTLLSIIDEGSFEGASLALSISPSAVSQRVKALEHHVGRVLVSRTQPAKATEAGEVLVQAARKMVLLQAETKAQLSGRLAEIPLTIAINADSLSTWFPPVFNEVASWGGATLTLRLEDEAHTLSLLRRGDVLGAVTREANPVAGCEVVELGTMRHLAIATPSLRDAYMVDGKLDWAAMPVLRFGPKDVLQDRDLDGRVDGPVGRRRVSIVPSAEGFGEAIRRGLGWGLLPETQAAPMLKAGEVILLDEIPIDTPMYWQRWRLESRSLARLTDAVVDAAIEGLRP.

Residues 1-57 (MNPIQLDTLLSIIDEGSFEGASLALSISPSAVSQRVKALEHHVGRVLVSRTQPAKAT) form the HTH lysR-type domain. Positions 18–37 (FEGASLALSISPSAVSQRVK) form a DNA-binding region, H-T-H motif.

It belongs to the LysR transcriptional regulatory family.

Its function is as follows. Positively regulates the expression of the exporter LysE. Induction requires the presence of a coinducer, which is either intracellular L-lysine, L-arginine or L-citrulline. L-histidine also acts as a coinducer of lysE expression, but this amino acid is not exported by LysE. The lysEG system prevents bacteriostasis due to elevated L-lysine or L-arginine concentrations that arise during growth in the presence of peptides or in mutants possessing a deregulated biosynthesis pathway. In Corynebacterium glutamicum (strain ATCC 13032 / DSM 20300 / JCM 1318 / BCRC 11384 / CCUG 27702 / LMG 3730 / NBRC 12168 / NCIMB 10025 / NRRL B-2784 / 534), this protein is Lysine export transcriptional regulatory protein LysG.